We begin with the raw amino-acid sequence, 228 residues long: Large ribosomal subunit protein mL64 (228 aa).

2 disordered regions span residues Pro20–Asn44 and Gln186–Ser228. Residues Thr98–Ala207 are a coiled coil. The Nuclear localization signal motif lies at Lys184–Glu200. The segment covering Gln186–Arg202 has biased composition (basic and acidic residues). Low complexity predominate over residues Gln212 to Ser228.

Belongs to the mitochondrion-specific ribosomal protein mL64 family. As to quaternary structure, component of the mitochondrial ribosome large subunit (39S) which comprises a 16S rRNA and about 50 distinct proteins. Interacts with GADD45A, GADD45B and GADD45G. Interacts with NR4A1 via the NR4A1 AB domain. Interacts with ATAD3A and ATAD3B.

It is found in the mitochondrion. It localises to the nucleus. Its function is as follows. Acts as a negative regulator of G1 to S cell cycle phase progression by inhibiting cyclin-dependent kinases. Inhibitory effects are additive with GADD45 proteins but also occur in the absence of GADD45 proteins. Acts as a repressor of the orphan nuclear receptor NR4A1 by inhibiting AB domain-mediated transcriptional activity. May be involved in the hormone-mediated regulation of NR4A1 transcriptional activity. May play a role in mitochondrial protein synthesis. The chain is Large ribosomal subunit protein mL64 (Gadd45gip1) from Rattus norvegicus (Rat).